We begin with the raw amino-acid sequence, 305 residues long: Porphobilinogen deaminase (305 aa).

Cys239 carries the S-(dipyrrolylmethanemethyl)cysteine modification.

It belongs to the HMBS family. As to quaternary structure, monomer. Dipyrromethane serves as cofactor.

It catalyses the reaction 4 porphobilinogen + H2O = hydroxymethylbilane + 4 NH4(+). It functions in the pathway porphyrin-containing compound metabolism; protoporphyrin-IX biosynthesis; coproporphyrinogen-III from 5-aminolevulinate: step 2/4. Functionally, tetrapolymerization of the monopyrrole PBG into the hydroxymethylbilane pre-uroporphyrinogen in several discrete steps. The sequence is that of Porphobilinogen deaminase from Dichelobacter nodosus (strain VCS1703A).